Here is a 184-residue protein sequence, read N- to C-terminus: Crossover junction endodeoxyribonuclease RuvC (184 aa).

Catalysis depends on residues D7, E68, and D141. Positions 7, 68, and 141 each coordinate Mg(2+).

This sequence belongs to the RuvC family. In terms of assembly, homodimer which binds Holliday junction (HJ) DNA. The HJ becomes 2-fold symmetrical on binding to RuvC with unstacked arms; it has a different conformation from HJ DNA in complex with RuvA. In the full resolvosome a probable DNA-RuvA(4)-RuvB(12)-RuvC(2) complex forms which resolves the HJ. Requires Mg(2+) as cofactor.

The protein localises to the cytoplasm. The catalysed reaction is Endonucleolytic cleavage at a junction such as a reciprocal single-stranded crossover between two homologous DNA duplexes (Holliday junction).. Functionally, the RuvA-RuvB-RuvC complex processes Holliday junction (HJ) DNA during genetic recombination and DNA repair. Endonuclease that resolves HJ intermediates. Cleaves cruciform DNA by making single-stranded nicks across the HJ at symmetrical positions within the homologous arms, yielding a 5'-phosphate and a 3'-hydroxyl group; requires a central core of homology in the junction. The consensus cleavage sequence is 5'-(A/T)TT(C/G)-3'. Cleavage occurs on the 3'-side of the TT dinucleotide at the point of strand exchange. HJ branch migration catalyzed by RuvA-RuvB allows RuvC to scan DNA until it finds its consensus sequence, where it cleaves and resolves the cruciform DNA. The chain is Crossover junction endodeoxyribonuclease RuvC from Mycobacterium ulcerans (strain Agy99).